The sequence spans 150 residues: Large ribosomal subunit protein bL9 (150 aa).

Belongs to the bacterial ribosomal protein bL9 family.

Binds to the 23S rRNA. The polypeptide is Large ribosomal subunit protein bL9 (Vesicomyosocius okutanii subsp. Calyptogena okutanii (strain HA)).